The sequence spans 99 residues: uncharacterized protein (99 aa).

Residues 43 to 95 (ENEEIYADQVRRIKLRLRELRETYATSEDNWRELMDNLEELRDQIERLAIRGG) adopt a coiled-coil conformation.

This is an uncharacterized protein from Archaeoglobus fulgidus (strain ATCC 49558 / DSM 4304 / JCM 9628 / NBRC 100126 / VC-16).